A 253-amino-acid polypeptide reads, in one-letter code: Sec-independent protein translocase protein TatC (253 aa).

6 helical membrane passes run 18–38, 69–89, 96–116, 151–171, 187–207, and 208–228; these read VSVGTILVAFLGCFHFWKSIF, AIVISMPIIFWQLWLFIAPGL, VILPFVFFGSGMFLIGAAFSY, LILGFGVAFELPVLAYFLAKV, IVVIFIVAAIITPPDVVSQIF, and MALPLVGLYGLSILIAKMVNP. A disordered region spans residues 231–253; the sequence is KDNENNNENNNENNTKENTKSES. Over residues 244-253 the composition is skewed to basic and acidic residues; the sequence is NTKENTKSES.

This sequence belongs to the TatC family. The Tat system comprises two distinct complexes: a TatABC complex, containing multiple copies of TatA, TatB and TatC subunits, and a separate TatA complex, containing only TatA subunits. Substrates initially bind to the TatABC complex, which probably triggers association of the separate TatA complex to form the active translocon.

It is found in the cell inner membrane. Part of the twin-arginine translocation (Tat) system that transports large folded proteins containing a characteristic twin-arginine motif in their signal peptide across membranes. Together with TatB, TatC is part of a receptor directly interacting with Tat signal peptides. The sequence is that of Sec-independent protein translocase protein TatC from Helicobacter pylori (strain ATCC 700392 / 26695) (Campylobacter pylori).